A 148-amino-acid polypeptide reads, in one-letter code: Large ribosomal subunit protein bL9 (148 aa).

Belongs to the bacterial ribosomal protein bL9 family.

Functionally, binds to the 23S rRNA. The polypeptide is Large ribosomal subunit protein bL9 (Oceanobacillus iheyensis (strain DSM 14371 / CIP 107618 / JCM 11309 / KCTC 3954 / HTE831)).